The chain runs to 467 residues: ATP-dependent protease ATPase subunit HslU (467 aa).

ATP is bound by residues Val20, 62 to 67 (GVGKTE), Asp280, Glu345, and Arg417.

This sequence belongs to the ClpX chaperone family. HslU subfamily. As to quaternary structure, a double ring-shaped homohexamer of HslV is capped on each side by a ring-shaped HslU homohexamer. The assembly of the HslU/HslV complex is dependent on binding of ATP.

Its subcellular location is the cytoplasm. ATPase subunit of a proteasome-like degradation complex; this subunit has chaperone activity. The binding of ATP and its subsequent hydrolysis by HslU are essential for unfolding of protein substrates subsequently hydrolyzed by HslV. HslU recognizes the N-terminal part of its protein substrates and unfolds these before they are guided to HslV for hydrolysis. This is ATP-dependent protease ATPase subunit HslU from Enterococcus faecalis (strain ATCC 700802 / V583).